The chain runs to 239 residues: Fatty acid metabolism regulator protein (239 aa).

The 69-residue stretch at 6–74 folds into the HTH gntR-type domain; the sequence is QSPAGFAEEY…HGKPTKVNNF (69 aa). The H-T-H motif DNA-binding region spans 34-53; that stretch reads ERELSELIGVTRTTLREVLQ.

As to quaternary structure, homodimer.

It is found in the cytoplasm. Functionally, multifunctional regulator of fatty acid metabolism. The protein is Fatty acid metabolism regulator protein of Enterobacter sp. (strain 638).